A 322-amino-acid polypeptide reads, in one-letter code: Ornithine carbamoyltransferase (322 aa).

Carbamoyl phosphate-binding positions include 67–70 (STRT), Gln94, Arg118, and 145–148 (HPCQ). L-ornithine-binding positions include Asn176, Asp240, and 244-245 (SM). Residues 280-281 (CL) and Arg308 contribute to the carbamoyl phosphate site.

Belongs to the aspartate/ornithine carbamoyltransferase superfamily. OTCase family.

The protein localises to the cytoplasm. It carries out the reaction carbamoyl phosphate + L-ornithine = L-citrulline + phosphate + H(+). It participates in amino-acid biosynthesis; L-arginine biosynthesis; L-arginine from L-ornithine and carbamoyl phosphate: step 1/3. Reversibly catalyzes the transfer of the carbamoyl group from carbamoyl phosphate (CP) to the N(epsilon) atom of ornithine (ORN) to produce L-citrulline. In Oceanobacillus iheyensis (strain DSM 14371 / CIP 107618 / JCM 11309 / KCTC 3954 / HTE831), this protein is Ornithine carbamoyltransferase.